The primary structure comprises 33 residues: Protein YtiC (33 aa).

Residues 10–29 form a helical membrane-spanning segment; that stretch reads FDMLSIYIIYKLIVSNNTWL.

The protein resides in the cell inner membrane. The sequence is that of Protein YtiC from Escherichia coli (strain K12).